Consider the following 820-residue polypeptide: Sucrose synthase 2 (820 aa).

The GT-B glycosyltransferase stretch occupies residues 276-753 (MVFNVVILSP…GLKRIYEKYT (478 aa)).

The protein belongs to the glycosyltransferase 1 family. Plant sucrose synthase subfamily.

It catalyses the reaction an NDP-alpha-D-glucose + D-fructose = a ribonucleoside 5'-diphosphate + sucrose + H(+). Functionally, sucrose-cleaving enzyme that provides UDP-glucose and fructose for various metabolic pathways. This chain is Sucrose synthase 2, found in Tulipa gesneriana (Garden tulip).